A 232-amino-acid chain; its full sequence is Pirin-like protein CC_1473 (232 aa).

Belongs to the pirin family.

This Caulobacter vibrioides (strain ATCC 19089 / CIP 103742 / CB 15) (Caulobacter crescentus) protein is Pirin-like protein CC_1473.